We begin with the raw amino-acid sequence, 430 residues long: Aspartate aminotransferase, mitochondrial (430 aa).

The transit peptide at 1–29 (MALLHSGRALPGIAAAFHPGLAAAASARA) directs the protein to the mitochondrion. Residue Thr48 is modified to Phosphothreonine. Lys59 is modified (N6-acetyllysine). Gly65 contributes to the substrate binding site. Lys73 is modified (N6-acetyllysine; alternate). An N6-succinyllysine; alternate modification is found at Lys73. N6-acetyllysine is present on Lys82. Lys90 is subject to N6-acetyllysine; alternate. Position 90 is an N6-succinyllysine; alternate (Lys90). Tyr96 carries the post-translational modification 3'-nitrotyrosine; alternate. Residue Tyr96 is modified to Phosphotyrosine; alternate. Residues Lys107 and Lys122 each carry the N6-acetyllysine; alternate modification. 2 positions are modified to N6-succinyllysine; alternate: Lys107 and Lys122. Position 143 is a phosphoserine (Ser143). At Lys159 the chain carries N6-acetyllysine; alternate. Lys159 carries the post-translational modification N6-succinyllysine; alternate. Substrate is bound at residue Trp162. N6-acetyllysine; alternate is present on Lys185. An N6-succinyllysine; alternate modification is found at Lys185. Asn215 contacts substrate. The residue at position 227 (Lys227) is an N6-succinyllysine. Lys234 carries the post-translational modification N6-acetyllysine. 2 positions are modified to N6-acetyllysine; alternate: Lys279 and Lys296. Lys279 carries the post-translational modification N6-(pyridoxal phosphate)lysine; alternate. N6-succinyllysine; alternate is present on Lys296. Lys302 bears the N6-acetyllysine mark. The residue at position 309 (Lys309) is an N6-acetyllysine; alternate. Lys309 is subject to N6-succinyllysine; alternate. Residue Arg313 is modified to Asymmetric dimethylarginine. Thr333 is modified (phosphothreonine). Lys338 bears the N6-acetyllysine; alternate mark. Lys338 carries the N6-succinyllysine; alternate modification. Lys345 is subject to N6-acetyllysine. Lys363 is modified (N6-acetyllysine; alternate). Lys363 bears the N6-succinyllysine; alternate mark. N6-acetyllysine is present on residues Lys364 and Lys387. Lys396 and Lys404 each carry N6-acetyllysine; alternate. N6-succinyllysine; alternate is present on residues Lys396 and Lys404. Arg407 serves as a coordination point for substrate.

Belongs to the class-I pyridoxal-phosphate-dependent aminotransferase family. Homodimer. Pyridoxal 5'-phosphate is required as a cofactor.

The protein resides in the mitochondrion matrix. It localises to the cell membrane. It carries out the reaction L-aspartate + 2-oxoglutarate = oxaloacetate + L-glutamate. It catalyses the reaction L-kynurenine + 2-oxoglutarate = kynurenate + L-glutamate + H2O. Functionally, catalyzes the irreversible transamination of the L-tryptophan metabolite L-kynurenine to form kynurenic acid (KA). As a member of the malate-aspartate shuttle, it has a key role in the intracellular NAD(H) redox balance. Is important for metabolite exchange between mitochondria and cytosol, and for amino acid metabolism. Facilitates cellular uptake of long-chain free fatty acids. This Pongo abelii (Sumatran orangutan) protein is Aspartate aminotransferase, mitochondrial (GOT2).